The following is a 476-amino-acid chain: Ubiquinone biosynthesis monooxygenase COQ6, mitochondrial (476 aa).

A mitochondrion-targeting transit peptide spans 1–35 (MAARIGSMAGLLCVRWWSSAQLAARGGPLVASQRW). The residue at position 219 (K219) is an N6-succinyllysine.

It belongs to the UbiH/COQ6 family. In terms of assembly, component of a multi-subunit COQ enzyme complex, composed of at least COQ3, COQ4, COQ5, COQ6, COQ7 and COQ9. Interacts with COQ8B and COQ7. Requires FAD as cofactor. Expressed in the kidney, in podocytes.

The protein resides in the mitochondrion inner membrane. It localises to the golgi apparatus. The protein localises to the cell projection. The enzyme catalyses 4-hydroxy-3-(all-trans-decaprenyl)benzoate + 2 reduced [2Fe-2S]-[ferredoxin] + O2 + 2 H(+) = 3,4-dihydroxy-5-(all-trans-decaprenyl)benzoate + 2 oxidized [2Fe-2S]-[ferredoxin] + H2O. It catalyses the reaction 2-methoxy-6-(all-trans-decaprenyl)phenol + 2 reduced [2Fe-2S]-[ferredoxin] + O2 + 2 H(+) = 2-methoxy-6-(all-trans-decaprenyl)benzene-1,4-diol + 2 oxidized [2Fe-2S]-[ferredoxin] + H2O. It participates in cofactor biosynthesis; ubiquinone biosynthesis. Functionally, FAD-dependent monooxygenase required for two non-consecutive steps during ubiquinone biosynthesis. Required for the C5-ring hydroxylation during ubiquinone biosynthesis by catalyzing the hydroxylation of 4-hydroxy-3-(all-trans-decaprenyl)benzoic acid to 3,4-dihydroxy-5-(all-trans-decaprenyl)benzoic acid. Also acts downstream of COQ4, for the C1-hydroxylation during ubiquinone biosynthesis by catalyzing the hydroxylation of 2-methoxy-6-(all-trans-decaprenyl)phenol to 2-methoxy-6-(all-trans-decaprenyl)benzene-1,4-diol. The electrons required for the hydroxylation reaction are funneled indirectly to COQ6 from NADPH via a ferredoxin/ferredoxin reductase system composed of FDX2 and FDXR. This chain is Ubiquinone biosynthesis monooxygenase COQ6, mitochondrial, found in Mus musculus (Mouse).